The following is a 692-amino-acid chain: Elongation factor G (692 aa).

Positions 8-282 (ENTRNIGIMA…AVIDYLPSPL (275 aa)) constitute a tr-type G domain. Residues 17 to 24 (AHIDAGKT), 81 to 85 (DTPGH), and 135 to 138 (NKMD) each bind GTP.

The protein belongs to the TRAFAC class translation factor GTPase superfamily. Classic translation factor GTPase family. EF-G/EF-2 subfamily.

The protein localises to the cytoplasm. Its function is as follows. Catalyzes the GTP-dependent ribosomal translocation step during translation elongation. During this step, the ribosome changes from the pre-translocational (PRE) to the post-translocational (POST) state as the newly formed A-site-bound peptidyl-tRNA and P-site-bound deacylated tRNA move to the P and E sites, respectively. Catalyzes the coordinated movement of the two tRNA molecules, the mRNA and conformational changes in the ribosome. This chain is Elongation factor G, found in Bacillus cytotoxicus (strain DSM 22905 / CIP 110041 / 391-98 / NVH 391-98).